We begin with the raw amino-acid sequence, 395 residues long: F-box/kelch-repeat protein SKIP25 (395 aa).

Residues Met1–Gly29 are disordered. The F-box domain occupies Ala34–Leu79. 5 Kelch repeats span residues Ala81 to Pro129, Leu147 to Gly194, Ile196 to Glu245, Ala246 to Glu299, and Ile301 to Thr342.

In terms of assembly, part of a SCF (ASK-cullin-F-box) protein ligase complex. Interacts with SKP1A/ASK1.

The protein localises to the nucleus. It participates in protein modification; protein ubiquitination. Component of SCF(ASK-cullin-F-box) E3 ubiquitin ligase complexes, which may mediate the ubiquitination and subsequent proteasomal degradation of target proteins. In Arabidopsis thaliana (Mouse-ear cress), this protein is F-box/kelch-repeat protein SKIP25 (SKIP25).